We begin with the raw amino-acid sequence, 348 residues long: Heat-inducible transcription repressor HrcA (348 aa).

The protein belongs to the HrcA family.

Its function is as follows. Negative regulator of class I heat shock genes (grpE-dnaK-dnaJ and groELS operons). Prevents heat-shock induction of these operons. This is Heat-inducible transcription repressor HrcA from Chlorobium chlorochromatii (strain CaD3).